Consider the following 488-residue polypeptide: GTPase Der (488 aa).

2 EngA-type G domains span residues 3–166 and 199–372; these read PVVA…AEAM and IKLA…DSAT. GTP is bound by residues 9 to 16, 56 to 60, 118 to 121, 205 to 212, 252 to 256, and 317 to 320; these read GRPNVGKS, DTGGI, NKVD, GKPNVGKS, DTAGV, and NKWD. The KH-like domain maps to 373-457; the sequence is RRVSTSMLTR…PIQLRFQEGD (85 aa). The tract at residues 469-488 is disordered; that stretch reads MSQERRRKRALSHIKDRKTK. Over residues 473–488 the composition is skewed to basic residues; the sequence is RRRKRALSHIKDRKTK.

It belongs to the TRAFAC class TrmE-Era-EngA-EngB-Septin-like GTPase superfamily. EngA (Der) GTPase family. In terms of assembly, associates with the 50S ribosomal subunit.

Its function is as follows. GTPase that plays an essential role in the late steps of ribosome biogenesis. The protein is GTPase Der of Shewanella sp. (strain W3-18-1).